The following is a 238-amino-acid chain: Ribosomal RNA small subunit methyltransferase G (238 aa).

S-adenosyl-L-methionine-binding positions include Gly75, Leu80, 126-127, and Arg142; that span reads AE.

Belongs to the methyltransferase superfamily. RNA methyltransferase RsmG family.

It is found in the cytoplasm. Functionally, specifically methylates the N7 position of guanine in position 518 of 16S rRNA. The sequence is that of Ribosomal RNA small subunit methyltransferase G from Streptomyces avermitilis (strain ATCC 31267 / DSM 46492 / JCM 5070 / NBRC 14893 / NCIMB 12804 / NRRL 8165 / MA-4680).